Consider the following 251-residue polypeptide: Flap endonuclease Xni (251 aa).

D104 is a binding site for Mg(2+). Residues 160-249 (VQPQQLPDYW…IDGNLQQLRL (90 aa)) form the 5'-3' exonuclease domain. K(+) contacts are provided by L171, A172, P180, V182, and I185. Residues 184-189 (GIGPKS) form an interaction with DNA region.

The protein belongs to the Xni family. Requires Mg(2+) as cofactor. The cofactor is K(+).

In terms of biological role, has flap endonuclease activity. During DNA replication, flap endonucleases cleave the 5'-overhanging flap structure that is generated by displacement synthesis when DNA polymerase encounters the 5'-end of a downstream Okazaki fragment. This Escherichia coli O139:H28 (strain E24377A / ETEC) protein is Flap endonuclease Xni.